The sequence spans 352 residues: Outer membrane protein assembly factor BamC (352 aa).

Positions methionine 1 to glycine 19 are cleaved as a signal peptide. A lipid anchor (N-palmitoyl cysteine) is attached at cysteine 20. Cysteine 20 is lipidated: S-diacylglycerol cysteine.

It belongs to the BamC family. In terms of assembly, part of the Bam complex.

The protein resides in the cell outer membrane. Its function is as follows. Part of the outer membrane protein assembly complex, which is involved in assembly and insertion of beta-barrel proteins into the outer membrane. The protein is Outer membrane protein assembly factor BamC of Pseudoalteromonas sp. (strain SM9913).